Reading from the N-terminus, the 544-residue chain is MSSILTSTVTGIDAIKILINNTADKIINSKYKDEIKHNVFVENTVDESNFNAGVKIKKIYDDYNDFLKEEKRKISERVQDEQTKIEEYLKLEDLFGEKSNIFTLLINQLYSSIENDIVNNHGNVFNENIENNLNTIIHELKNFDEKLSFLERDVKESIKEKIKQANILINKIYDTNIDIRFFPTAQLPNRIDSFIDKRDKLIDELNDIIGVKVIKENSTFKVCLNNGMCIIDDYNKKNLMTLTSDTDDKYISVGYFDDNEQRLKKIEHMIPSASLGALLTFRREDLQNAKNKIGQLTINFADSINSVHTLGYDILGNIGKQVFKISNPEIISSSQNQSYLPTSIKWVDTADAQDTNYIVFLKNNHWTVTRLRDHSVVEPDIYQQDNNTYITFDGIEFKIEGNDAEGNMYMIKPYSKTLNELELLIIKNDLFSISSSDDLNQKNRNNAIKIQHLHQEKIVNKKETLYESYLRFLKSISYKCNDLEEKVPFKRNMIEILNNKKLSESDDMYENYQNLNYEQKCYLANVKVLKMAETIFDEIVDCYS.

It belongs to the flagella basal body rod proteins family.

Its subcellular location is the secreted. It is found in the bacterial flagellum. This chain is Flagellar hook-associated protein 1 (flgK), found in Buchnera aphidicola subsp. Schizaphis graminum (strain Sg).